The primary structure comprises 353 residues: Phospho-N-acetylmuramoyl-pentapeptide-transferase (353 aa).

Helical transmembrane passes span 24-44 (LGFF…ILWA), 66-86 (TPTM…VLCA), 88-108 (LGNL…FVGF), 129-149 (FGML…KGLD), 160-180 (PLFE…FLST), 192-212 (GLAS…VYVA), 229-249 (VGEL…FLWY), 256-276 (VFMG…NAIV), 281-301 (ILLV…ILQV), and 330-350 (KVIV…LLSL).

This sequence belongs to the glycosyltransferase 4 family. MraY subfamily. The cofactor is Mg(2+).

The protein resides in the cell inner membrane. It catalyses the reaction UDP-N-acetyl-alpha-D-muramoyl-L-alanyl-gamma-D-glutamyl-meso-2,6-diaminopimeloyl-D-alanyl-D-alanine + di-trans,octa-cis-undecaprenyl phosphate = di-trans,octa-cis-undecaprenyl diphospho-N-acetyl-alpha-D-muramoyl-L-alanyl-D-glutamyl-meso-2,6-diaminopimeloyl-D-alanyl-D-alanine + UMP. It functions in the pathway cell wall biogenesis; peptidoglycan biosynthesis. Functionally, catalyzes the initial step of the lipid cycle reactions in the biosynthesis of the cell wall peptidoglycan: transfers peptidoglycan precursor phospho-MurNAc-pentapeptide from UDP-MurNAc-pentapeptide onto the lipid carrier undecaprenyl phosphate, yielding undecaprenyl-pyrophosphoryl-MurNAc-pentapeptide, known as lipid I. This Helicobacter pylori (strain ATCC 700392 / 26695) (Campylobacter pylori) protein is Phospho-N-acetylmuramoyl-pentapeptide-transferase.